Here is a 145-residue protein sequence, read N- to C-terminus: 3-hydroxyacyl-[acyl-carrier-protein] dehydratase FabZ (145 aa).

The active site involves H47.

This sequence belongs to the thioester dehydratase family. FabZ subfamily.

The protein resides in the cytoplasm. It carries out the reaction a (3R)-hydroxyacyl-[ACP] = a (2E)-enoyl-[ACP] + H2O. Functionally, involved in unsaturated fatty acids biosynthesis. Catalyzes the dehydration of short chain beta-hydroxyacyl-ACPs and long chain saturated and unsaturated beta-hydroxyacyl-ACPs. The protein is 3-hydroxyacyl-[acyl-carrier-protein] dehydratase FabZ of Polaromonas naphthalenivorans (strain CJ2).